A 317-amino-acid chain; its full sequence is U5 small nuclear ribonucleoprotein TSSC4 (317 aa).

Acidic residues predominate over residues Met1–Leu19. Positions Met1–His78 are disordered. Residues Pro20–Ser37 are compositionally biased toward low complexity. A phosphoserine mark is found at Ser57, Ser64, Ser83, and Ser92. A hom2; mediates interaction with the U5 snRNP complexes and required for spliceosomal tri-snRNP complex assembly region spans residues Val74–Ala101. The segment at Val123–Asp151 is disordered. The interaction with SNRNP200 stretch occupies residues Val146 to Arg300. Residues His147–Leu183 are hom3; mediates interaction with the U5 snRNP complexes. Residues Phe198 to Gly238 are hom4; necessary for interaction with the PRPF19 complex and required for spliceosomal tri-snRNP complex assembly. Lys214 carries the N6-acetyllysine modification. The interval His247–Val317 is disordered.

The protein belongs to the TSSC4 family. Interacts in a RNA-independent manner with distinct U5 snRNP-containing complexes, the mono-U5 snRNP and the post-splicing U5 snRNP-PRPF19 complex. Interacts with SNRNP200; the interaction is direct, excludes recruitment of C9ORF78 and WBP4 to SNRNP200 and negatively regulates its RNA helicase activity. Interacts with PRPF8; the interaction is direct.

The protein resides in the nucleus. The protein localises to the cytoplasm. Protein associated with the U5 snRNP, during its maturation and its post-splicing recycling and which is required for spliceosomal tri-snRNP complex assembly in the nucleus. Has a molecular sequestering activity and transiently hinders SNRNP200 binding sites for constitutive splicing factors that intervene later during the assembly of the spliceosome and splicing. Together with its molecular sequestering activity, may also function as a molecular adapter and placeholder, coordinating the assembly of the U5 snRNP and its association with the U4/U6 di-snRNP. The polypeptide is U5 small nuclear ribonucleoprotein TSSC4 (Rattus norvegicus (Rat)).